Here is a 315-residue protein sequence, read N- to C-terminus: Large ribosomal subunit protein uL10 (315 aa).

A compositionally biased stretch (low complexity) spans alanine 285–proline 294. Positions alanine 285 to aspartate 315 are disordered. Acidic residues predominate over residues glutamate 300 to methionine 309.

The protein belongs to the universal ribosomal protein uL10 family. As to quaternary structure, P0 forms a pentameric complex by interaction with dimers of P1 and P2. In terms of processing, phosphorylated.

Functionally, ribosomal protein P0 is the functional equivalent of E.coli protein L10. This Lithobates sylvaticus (Wood frog) protein is Large ribosomal subunit protein uL10 (RPLP0).